The sequence spans 385 residues: Acetate kinase (385 aa).

N9 provides a ligand contact to Mg(2+). K16 contacts ATP. R87 is a binding site for substrate. D144 functions as the Proton donor/acceptor in the catalytic mechanism. ATP is bound by residues 202 to 206 (HLGSG) and 277 to 279 (DMR). E373 is a Mg(2+) binding site.

Belongs to the acetokinase family. In terms of assembly, homodimer. It depends on Mg(2+) as a cofactor. The cofactor is Mn(2+).

Its subcellular location is the cytoplasm. It catalyses the reaction acetate + ATP = acetyl phosphate + ADP. It functions in the pathway metabolic intermediate biosynthesis; acetyl-CoA biosynthesis; acetyl-CoA from acetate: step 1/2. Functionally, catalyzes the formation of acetyl phosphate from acetate and ATP. Can also catalyze the reverse reaction. This chain is Acetate kinase, found in Rickettsia felis (strain ATCC VR-1525 / URRWXCal2) (Rickettsia azadi).